Consider the following 231-residue polypeptide: Small ribosomal subunit protein uS3 (231 aa).

In terms of domain architecture, KH type-2 spans 39 to 108 (IKNYIKKRYK…EISISVLEVK (70 aa)).

The protein belongs to the universal ribosomal protein uS3 family. Part of the 30S ribosomal subunit. Forms a tight complex with proteins S10 and S14.

Its function is as follows. Binds the lower part of the 30S subunit head. Binds mRNA in the 70S ribosome, positioning it for translation. The sequence is that of Small ribosomal subunit protein uS3 from Aquifex pyrophilus.